We begin with the raw amino-acid sequence, 419 residues long: Hyaluronan synthase (419 aa).

Transmembrane regions (helical) follow at residues 8 to 28 (LIVL…MYLF), 33 to 53 (VGIY…LSFL), 318 to 338 (IVAL…VAIG), 345 to 365 (AIQL…IVAL), and 376 to 396 (PASF…LQPL).

Belongs to the NodC/HAS family. Mg(2+) is required as a cofactor.

The protein resides in the cell membrane. It carries out the reaction [hyaluronan](n) + UDP-N-acetyl-alpha-D-glucosamine = N-acetyl-beta-D-glucosaminyl-(1-&gt;4)-[hyaluronan](n) + UDP + H(+). It catalyses the reaction N-acetyl-beta-D-glucosaminyl-(1-&gt;4)-[hyaluronan](n) + UDP-alpha-D-glucuronate = [hyaluronan](n+1) + UDP + H(+). It functions in the pathway glycan biosynthesis; hyaluronan biosynthesis. Its function is as follows. Glycosaminoglycan synthesis. The hyaluronic acid capsule is involved in the pathogenicity of group A Streptococci; it may be the major virulence determinant. The protein is Hyaluronan synthase (hasA) of Streptococcus pyogenes serotype M1.